The sequence spans 222 residues: Large ribosomal subunit protein uL1 (222 aa).

The protein belongs to the universal ribosomal protein uL1 family. In terms of assembly, part of the 50S ribosomal subunit.

In terms of biological role, binds directly to 23S rRNA. Probably involved in E site tRNA release. Protein L1 is also a translational repressor protein, it controls the translation of its operon by binding to its mRNA. The polypeptide is Large ribosomal subunit protein uL1 (Pyrobaculum arsenaticum (strain DSM 13514 / JCM 11321 / PZ6)).